We begin with the raw amino-acid sequence, 703 residues long: Leucine zipper putative tumor suppressor 3 (703 aa).

Disordered regions lie at residues 1–22 (MAPA…PHLF), 40–190 (RADP…SEPL), and 204–347 (FHSM…PPSP). The span at 96-107 (GSFPGPRSSGSG) shows a compositional bias: low complexity. Over residues 109–124 (NRERPGPGRYPSEDKV) the composition is skewed to basic and acidic residues. The segment covering 205-218 (HSMQNLCPPQTNGT) has biased composition (polar residues). Over residues 251–268 (DSGRNSLTSLPTYSSSYS) the composition is skewed to low complexity. Residues 290-299 (SSGGGGGGSG) show a composition bias toward gly residues. Over residues 304–324 (GTSDSGRASSKSGSSSSMGRS) the composition is skewed to low complexity. Residues 325 to 336 (GHLGSGEGGNGG) show a composition bias toward gly residues. Phosphoserine occurs at positions 346 and 348. 2 coiled-coil regions span residues 348–526 (SALI…SLRD) and 600–669 (TRAL…RLRE). Residues 665 to 703 (RRLRERGAAGGSRTPTPQHGEEEKAWTPSRLERIESTEI) form a disordered region. The span at 683–703 (HGEEEKAWTPSRLERIESTEI) shows a compositional bias: basic and acidic residues.

Belongs to the LZTS3 family. In terms of assembly, interacts (via C-terminus) with SHANK3 (via PDZ domain). Interacts (via coiled coil) with SIPA1L1. Can form homooligomers. In terms of tissue distribution, detected in brain, with highest expression in brain cortex, caudate putamen, cerebellum and hippocampus. Detected in neuropil (at protein level). Detected in brain and kidney.

It localises to the synapse. It is found in the postsynaptic density. The protein localises to the cell projection. Its subcellular location is the dendritic spine. The protein resides in the dendrite. It localises to the cytoplasm. It is found in the cytoskeleton. In terms of biological role, may be involved in promoting the maturation of dendritic spines, probably via regulating SIPA1L1 levels at the postsynaptic density of synapses. This chain is Leucine zipper putative tumor suppressor 3, found in Rattus norvegicus (Rat).